We begin with the raw amino-acid sequence, 116 residues long: G antigen 10 (116 aa).

The disordered stretch occupies residues 1 to 116 (MSWRGRSTYR…PEEGEKQSQC (116 aa)). A compositionally biased stretch (acidic residues) spans 31–44 (FSDEVEPATPEEGE). Composition is skewed to basic and acidic residues over residues 71 to 80 (PEADSQEQVH) and 102 to 116 (EEVK…QSQC).

This sequence belongs to the GAGE family.

This chain is G antigen 10 (GAGE10), found in Homo sapiens (Human).